The chain runs to 535 residues: UDP-glucuronosyltransferase 1A1 (535 aa).

Positions 1–29 are cleaved as a signal peptide; the sequence is MTVVCWSSRLLLLLPYLLLCVFGPSASHA. N-linked (GlcNAc...) asparagine glycosylation is found at Asn-89, Asn-297, and Asn-435. The chain crosses the membrane as a helical span at residues 493 to 509; sequence VIGFLLAIVLTVVFIVF.

Belongs to the UDP-glycosyltransferase family. Homodimers. Homooligomer. Interacts with UGT1A3, UGT1A4, UGT1A6, UGT1A7, UGT1A8, UGT1A9 and UGT1A10 to form heterodimers. Highly expressed in liver and at lower levels in colon, kidney, stomach and intestine.

It localises to the endoplasmic reticulum membrane. It carries out the reaction glucuronate acceptor + UDP-alpha-D-glucuronate = acceptor beta-D-glucuronoside + UDP + H(+). The catalysed reaction is 17beta-estradiol + UDP-alpha-D-glucuronate = 17beta-estradiol 3-O-(beta-D-glucuronate) + UDP + H(+). It catalyses the reaction 2-hydroxyestrone + UDP-alpha-D-glucuronate = 2-hydroxyestrone 3-O-(beta-D-glucuronate) + UDP + H(+). The enzyme catalyses 2-hydroxy-17beta-estradiol + UDP-alpha-D-glucuronate = 2-hydroxy-17beta-estradiol 3-O-(beta-D-glucuronate) + UDP + H(+). It carries out the reaction 2-methoxy-17beta-estradiol + UDP-alpha-D-glucuronate = 2-methoxy-17beta-estradiol 3-O-(beta-D-glucuronate) + UDP + H(+). The catalysed reaction is 17alpha-estradiol + UDP-alpha-D-glucuronate = 17alpha-estradiol 3-O-(beta-D-glucuronate) + UDP + H(+). It catalyses the reaction 16beta,17beta-estriol + UDP-alpha-D-glucuronate = 16beta,17beta-estriol 16-O-(beta-D-glucuronate) + UDP + H(+). The enzyme catalyses losartan + UDP-alpha-D-glucuronate = losartan-2-N-beta-D-glucuronide + UDP. It carries out the reaction prunetin + UDP-alpha-D-glucuronate = prunetin-4'-O-beta-D-glucuronide + UDP. The catalysed reaction is SN-38 + UDP-alpha-D-glucuronate = SN-38 O-beta-D-glucuronide + UDP + H(+). It catalyses the reaction (4Z,15Z)-bilirubin IXalpha + UDP-alpha-D-glucuronate = (4Z,15Z)-bilirubin IXalpha C12-beta-D-glucuronoside + UDP. The enzyme catalyses (4Z,15Z)-bilirubin IXalpha + UDP-alpha-D-glucuronate = (4Z,15Z)-bilirubin IXalpha C8-beta-D-glucuronoside + UDP. It carries out the reaction (4Z,15Z)-bilirubin IXalpha C8-beta-D-glucuronoside + UDP-alpha-D-glucuronate = (4Z,15Z)-bilirubin IXalpha C8,C12-beta-D-bisglucuronoside + UDP. The catalysed reaction is (4Z,15Z)-bilirubin IXalpha C12-beta-D-glucuronoside + UDP-alpha-D-glucuronate = (4Z,15Z)-bilirubin IXalpha C8,C12-beta-D-bisglucuronoside + UDP. It catalyses the reaction 8-iso-prostaglandin F2alpha + UDP-alpha-D-glucuronate = 8-iso-prostaglandin F2alpha-glucuronide + UDP + H(+). The enzyme catalyses (5Z,8Z,11Z,14Z)-eicosatetraenoate + UDP-alpha-D-glucuronate = O-[(5Z),(8Z),(11Z),(14Z)-eicosatetraenoyl]-beta-D-glucuronate + UDP. It carries out the reaction 15-hydroxy-(5Z,8Z,11Z,13E)-eicosatetraenoate + UDP-alpha-D-glucuronate = 15-O-(beta-D-glucuronosyl)-(5Z,8Z,11Z,14Z)-eicosatetraenoate + UDP + H(+). The catalysed reaction is 20-hydroxy-(5Z,8Z,11Z,14Z)-eicosatetraenoate + UDP-alpha-D-glucuronate = 20-O-(beta-D-glucuronosyl)-(5Z,8Z,11Z,14Z)-eicosatetraenoate + UDP + H(+). It catalyses the reaction prostaglandin B1 + UDP-alpha-D-glucuronate = 15-O-(beta-D-glucuronosyl)-prostaglandin B1 + UDP + H(+). The enzyme catalyses (E)-ferulate + UDP-alpha-D-glucuronate = (E)-4-O-(beta-D-glucuronosyl)-ferulate + UDP + H(+). It carries out the reaction (E)-ferulate + UDP-alpha-D-glucuronate = (E)-ferulic acid beta-D-glucuronate ester + UDP. Functionally, UDP-glucuronosyltransferase (UGT) that catalyzes phase II biotransformation reactions in which lipophilic substrates are conjugated with glucuronic acid to increase the metabolite's water solubility, thereby facilitating excretion into either the urine or bile. Essential for the elimination and detoxification of drugs, xenobiotics and endogenous compounds. Catalyzes the glucuronidation of endogenous estrogen hormones such as estradiol, estrone and estriol. Involved in the glucuronidation of bilirubin, a degradation product occurring in the normal catabolic pathway that breaks down heme in vertebrates. Involved in the glucuronidation of arachidonic acid (AA) and AA-derived eicosanoids including 15-HETE, 20-HETE, PGB1 and F2-isoprostane (8-iso-PGF2alpha). Involved in the glucuronidation of the phytochemical ferulic acid at the phenolic or the carboxylic acid group. Also catalyzes the glucuronidation the isoflavones genistein, daidzein, glycitein, formononetin, biochanin A and prunetin, which are phytoestrogens with anticancer and cardiovascular properties. Involved in the glucuronidation of the AGTR1 angiotensin receptor antagonist losartan, a drug which can inhibit the effect of angiotensin II. Involved in the biotransformation of 7-ethyl-10-hydroxycamptothecin (SN-38), the pharmacologically active metabolite of the anticancer drug irinotecan. In Mus musculus (Mouse), this protein is UDP-glucuronosyltransferase 1A1.